Reading from the N-terminus, the 98-residue chain is Protein translation factor SUI1 homolog (98 aa).

Belongs to the SUI1 family.

The sequence is that of Protein translation factor SUI1 homolog from Thermococcus gammatolerans (strain DSM 15229 / JCM 11827 / EJ3).